A 271-amino-acid chain; its full sequence is ATP-dependent Clp protease proteolytic subunit 6, chloroplastic (271 aa).

The tract at residues 1 to 30 (MAGLAISPPLGLSFSSRTRNPKPTSFLSHN) is disordered. The transit peptide at 1 to 77 (MAGLAISPPL…KAPRFGVIEA (77 aa)) directs the protein to the chloroplast. Residues 13–30 (SFSSRTRNPKPTSFLSHN) are compositionally biased toward polar residues. Ser-175 functions as the Nucleophile in the catalytic mechanism. Residue His-200 is part of the active site.

Belongs to the peptidase S14 family. As to quaternary structure, component of the chloroplastic Clp protease core complex which consist of at least 16 proteins: CLPP4 (3 copies), CLPP5 (3 copies), CLPR4 (2 copies), ClpP1 (1 copy), CLPP6 (1 copy), CLPR2 (1 copy), CLPT1 (1 copy), CLPT2 (1 copy) and 3 copies of CLPP3 and/or CLPR1 and/or CLPR3. The core complex is organized in two heptameric rings, one containing CLPP3,4,5,6 in a 1:2:3:1 ratio and the other CLPP1 and CLPR1,2,3,4 in a 3:1:1:1:1 ratio. As to expression, mostly expressed in leaves. Also detected in stems, and to a lower extent, in roots (at protein level).

Its subcellular location is the plastid. It localises to the chloroplast stroma. The catalysed reaction is Hydrolysis of proteins to small peptides in the presence of ATP and magnesium. alpha-casein is the usual test substrate. In the absence of ATP, only oligopeptides shorter than five residues are hydrolyzed (such as succinyl-Leu-Tyr-|-NHMec, and Leu-Tyr-Leu-|-Tyr-Trp, in which cleavage of the -Tyr-|-Leu- and -Tyr-|-Trp bonds also occurs).. Its function is as follows. Cleaves peptides in various proteins in a process that requires ATP hydrolysis. Has a chymotrypsin-like activity. Plays a major role in the degradation of misfolded proteins. Essential protein required for chloroplast development and integrity. This is ATP-dependent Clp protease proteolytic subunit 6, chloroplastic from Arabidopsis thaliana (Mouse-ear cress).